The sequence spans 490 residues: UDP-glycosyltransferase 73C7 (490 aa).

Residues Ser-291, 351-353 (APQ), 368-376 (HCGWNSTLE), and 390-393 (FAEQ) contribute to the UDP-alpha-D-glucose site.

The protein belongs to the UDP-glycosyltransferase family.

This is UDP-glycosyltransferase 73C7 (UGT73C7) from Arabidopsis thaliana (Mouse-ear cress).